We begin with the raw amino-acid sequence, 551 residues long: Mesoderm induction early response protein 3 (551 aa).

Low complexity predominate over residues 1–16 (MAEASFGSSSPVGSLS). Disordered stretches follow at residues 1-62 (MAEA…EKEG) and 113-169 (LSGD…GNSP). The span at 17–36 (SEDHDFDPTAEMLVHDYDDE) shows a compositional bias: basic and acidic residues. Serine 52, serine 53, and serine 114 each carry phosphoserine. Polar residues predominate over residues 121 to 134 (QSSADDLTPSVTSH). The span at 154–163 (KESEIEDVET) shows a compositional bias: acidic residues. Serine 156 carries the post-translational modification Phosphoserine. Threonine 163 bears the Phosphothreonine mark. Residues serine 165 and serine 168 each carry the phosphoserine modification. Positions 174–273 (REIMIGLEYQ…EAIERYCCNG (100 aa)) constitute an ELM2 domain. Residues 278–330 (EGMTAWTEEECRSFEHALMLHGKDFHLIQKDKVRSRTVAECVAFYYMWKKSER) form the SANT domain.

It is found in the nucleus. In terms of biological role, transcriptional repressor. The polypeptide is Mesoderm induction early response protein 3 (Mier3) (Mus musculus (Mouse)).